A 359-amino-acid chain; its full sequence is MLYWLNELSDGGDVFNLFRYITFRAGGAFFTALIFGFIFGQPLINALRRKYKDGQPIREVGPAHETKAGTPTMGGLLILAALSLATLLWARLDNPYVWLVLGVTWCFGLIGFADDWAKVSRNSSAGVSGKVRLAIGFVVAFGAALIAAWVHPEELSNQLAMPVFKDVLLNMGWMYVPFVMIVIVGSANAVNLTDGLDGLAIMPVMIAAGTLGVIAYAVGRVDFTDYLDVHYVPGTGELLIFTAGLIGGGLGFLWYNAPPAAVFMGDTGSLALGGALGAIAVCTKHEIVLAIVGGLFVAEAVSVIVQVLYFKATGKRVFLMAPIHHHFEKKGWAEPQVVIRFWIISLILALIGLATLKLR.

10 helical membrane passes run 27–47 (GAFFTALIFGFIFGQPLINAL), 70–90 (TPTMGGLLILAALSLATLLWA), 97–117 (VWLVLGVTWCFGLIGFADDWA), 133–153 (LAIGFVVAFGAALIAAWVHPE), 167–187 (VLLNMGWMYVPFVMIVIVGSA), 198–218 (GLAIMPVMIAAGTLGVIAYAV), 238–258 (LLIFTAGLIGGGLGFLWYNAP), 261–281 (AVFMGDTGSLALGGALGAIAV), 287–307 (IVLAIVGGLFVAEAVSVIVQV), and 336–356 (QVVIRFWIISLILALIGLATL).

It belongs to the glycosyltransferase 4 family. MraY subfamily. The cofactor is Mg(2+).

It localises to the cell inner membrane. It catalyses the reaction UDP-N-acetyl-alpha-D-muramoyl-L-alanyl-gamma-D-glutamyl-meso-2,6-diaminopimeloyl-D-alanyl-D-alanine + di-trans,octa-cis-undecaprenyl phosphate = di-trans,octa-cis-undecaprenyl diphospho-N-acetyl-alpha-D-muramoyl-L-alanyl-D-glutamyl-meso-2,6-diaminopimeloyl-D-alanyl-D-alanine + UMP. Its pathway is cell wall biogenesis; peptidoglycan biosynthesis. Catalyzes the initial step of the lipid cycle reactions in the biosynthesis of the cell wall peptidoglycan: transfers peptidoglycan precursor phospho-MurNAc-pentapeptide from UDP-MurNAc-pentapeptide onto the lipid carrier undecaprenyl phosphate, yielding undecaprenyl-pyrophosphoryl-MurNAc-pentapeptide, known as lipid I. This chain is Phospho-N-acetylmuramoyl-pentapeptide-transferase, found in Jannaschia sp. (strain CCS1).